A 428-amino-acid polypeptide reads, in one-letter code: C4-dicarboxylate transport protein (428 aa).

Helical transmembrane passes span 8–28 (SLYFQVLTAIAIGILLGHFYP), 44–64 (LIKMIIAPVIFCTVVTGIAGM), 76–96 (VALLYFEIVSTIALIIGLIIV), 142–162 (IGAFASGNILQVLLFAVLFGF), 184–204 (VIFGIINMIMRLAPIGAFGAM), 222–242 (LIICFYITCILFVVLVLGSIA), 326–346 (IVHQITLLIVLLLSSKGAAGV), and 352–372 (IVLAATLSAVGHLPVAGLALI).

Belongs to the dicarboxylate/amino acid:cation symporter (DAACS) (TC 2.A.23) family.

The protein localises to the cell inner membrane. Its function is as follows. Responsible for the transport of dicarboxylates such as succinate, fumarate, and malate from the periplasm across the membrane. This chain is C4-dicarboxylate transport protein, found in Escherichia coli O139:H28 (strain E24377A / ETEC).